We begin with the raw amino-acid sequence, 525 residues long: GMP synthase [glutamine-hydrolyzing] (525 aa).

Residues 9–207 (RILILDFGSQ…VLDICGCAAL (199 aa)) enclose the Glutamine amidotransferase type-1 domain. Cys-86 acts as the Nucleophile in catalysis. Residues His-181 and Glu-183 contribute to the active site. The GMPS ATP-PPase domain maps to 208–400 (WTPSNIVDDA…LGLPYDMVYR (193 aa)). 235-241 (SGGVDSS) contributes to the ATP binding site.

Homodimer.

It catalyses the reaction XMP + L-glutamine + ATP + H2O = GMP + L-glutamate + AMP + diphosphate + 2 H(+). Its pathway is purine metabolism; GMP biosynthesis; GMP from XMP (L-Gln route): step 1/1. Functionally, catalyzes the synthesis of GMP from XMP. In Pseudomonas aeruginosa (strain UCBPP-PA14), this protein is GMP synthase [glutamine-hydrolyzing].